The primary structure comprises 351 residues: Photosystem II D2 protein (351 aa).

The helical transmembrane segment at 39–59 threads the bilayer; the sequence is TAYLAIGGWLTGTTFVTSWYT. Residue His116 coordinates chlorophyll a. The chain crosses the membrane as a helical span at residues 123 to 139; sequence GFMLRQFEIARLVGIRP. Pheophytin a is bound by residues Gln128 and Asn141. Residues 151–164 traverse the membrane as a helical segment; it reads VFVSVFLMYPLGQS. Residue His196 coordinates chlorophyll a. Residues 206 to 226 traverse the membrane as a helical segment; it reads GALLCAIHGATVENTLFEDGE. His213 and Phe260 together coordinate a plastoquinone. His213 lines the Fe cation pocket. Position 267 (His267) interacts with Fe cation. A helical membrane pass occupies residues 277–293; it reads GLWTSSIGIIGLALNLR.

Belongs to the reaction center PufL/M/PsbA/D family. As to quaternary structure, PSII is composed of 1 copy each of membrane proteins PsbA, PsbB, PsbC, PsbD, PsbE, PsbF, PsbH, PsbI, PsbJ, PsbK, PsbL, PsbM, PsbT, PsbX, PsbY, PsbZ, Psb30/Ycf12, peripheral proteins PsbO, CyanoQ (PsbQ), PsbU, PsbV and a large number of cofactors. It forms dimeric complexes. The cofactor is The D1/D2 heterodimer binds P680, chlorophylls that are the primary electron donor of PSII, and subsequent electron acceptors. It shares a non-heme iron and each subunit binds pheophytin, quinone, additional chlorophylls, carotenoids and lipids. There is also a Cl(-1) ion associated with D1 and D2, which is required for oxygen evolution. The PSII complex binds additional chlorophylls, carotenoids and specific lipids..

The protein localises to the cellular thylakoid membrane. It carries out the reaction 2 a plastoquinone + 4 hnu + 2 H2O = 2 a plastoquinol + O2. Functionally, photosystem II (PSII) is a light-driven water:plastoquinone oxidoreductase that uses light energy to abstract electrons from H(2)O, generating O(2) and a proton gradient subsequently used for ATP formation. It consists of a core antenna complex that captures photons, and an electron transfer chain that converts photonic excitation into a charge separation. The D1/D2 (PsbA/PsbD) reaction center heterodimer binds P680, the primary electron donor of PSII as well as several subsequent electron acceptors. D2 is needed for assembly of a stable PSII complex. In Synechococcus sp. (strain WH7803), this protein is Photosystem II D2 protein.